A 217-amino-acid polypeptide reads, in one-letter code: tRNA (guanine-N(7)-)-methyltransferase (217 aa).

4 residues coordinate S-adenosyl-L-methionine: Glu-44, Glu-69, Asp-96, and Asp-118. Residue Asp-118 is part of the active site. Substrate contacts are provided by residues Lys-122, Asp-154, and 191 to 194 (TEYE).

Belongs to the class I-like SAM-binding methyltransferase superfamily. TrmB family.

The enzyme catalyses guanosine(46) in tRNA + S-adenosyl-L-methionine = N(7)-methylguanosine(46) in tRNA + S-adenosyl-L-homocysteine. Its pathway is tRNA modification; N(7)-methylguanine-tRNA biosynthesis. Its function is as follows. Catalyzes the formation of N(7)-methylguanine at position 46 (m7G46) in tRNA. The sequence is that of tRNA (guanine-N(7)-)-methyltransferase from Bacillus cytotoxicus (strain DSM 22905 / CIP 110041 / 391-98 / NVH 391-98).